Here is a 289-residue protein sequence, read N- to C-terminus: 2-dehydro-3-deoxyphosphooctonate aldolase (289 aa).

This sequence belongs to the KdsA family.

It localises to the cytoplasm. It carries out the reaction D-arabinose 5-phosphate + phosphoenolpyruvate + H2O = 3-deoxy-alpha-D-manno-2-octulosonate-8-phosphate + phosphate. Its pathway is carbohydrate biosynthesis; 3-deoxy-D-manno-octulosonate biosynthesis; 3-deoxy-D-manno-octulosonate from D-ribulose 5-phosphate: step 2/3. The protein operates within bacterial outer membrane biogenesis; lipopolysaccharide biosynthesis. The chain is 2-dehydro-3-deoxyphosphooctonate aldolase from Cupriavidus taiwanensis (strain DSM 17343 / BCRC 17206 / CCUG 44338 / CIP 107171 / LMG 19424 / R1) (Ralstonia taiwanensis (strain LMG 19424)).